The primary structure comprises 439 residues: MVDFKLSPSQLEARRHAQAFANTVLTKASAEYSTQKDQLSRFQATRPFYREAVRHGLIKAQVPIPLGGTMESLVHESIILEELFAVEPATSITIVATALGLMPVILCDSPSLQEKFLKPFISGEGEPLASLMHSEPNGTANWLQKGGPGLQTTARKVGNEWVISGEKLWPSNSGGWDYKGADLACVVCRVSDDPSKPQDPNVDPATQIAVLLVTRETIANNKKDAYQILGEPELAGHITTSGPHTRFTEFHVPHENLLCTPGLKAQGLVETAFAMSAALVGAMAIGTARAAFEEALVFAKSDTRGGSKHIIEHQSVADKLIDCKIRLETSRLLVWKAVTTLEDEALEWKVKLEMAMQTKIYTTDVAVECVIDAMKAVGMKSYAKDMSFPRLLNEVMCYPLFDGGNIGLRRRQMQRVMALEDYEPWAATYGSSKVDKSRL.

FAD contacts are provided by residues 131–134 (LMHS), 139–141 (TAN), 169–171 (WPS), arginine 304, 313–314 (HQ), 375–379 (KAVGM), and 400–404 (LFDGG). The active-site Proton acceptor is the aspartate 402.

It belongs to the acyl-CoA dehydrogenase family. In terms of assembly, homotetramer. The cofactor is FAD.

The enzyme catalyses a primary nitroalkane + O2 + H2O = an aldehyde + nitrite + H2O2 + H(+). It catalyses the reaction a secondary nitroalkane + O2 + H2O = a ketone + nitrite + H2O2 + H(+). Strongly inhibited by mercury chloride and KCN. Catalyzes the oxidative denitrification of neutral nitroalkanes, including 3-nitro-2-pentanol, 1-nitropropane, 2-nitropropane, nitroethane and nitrocyclohexane, and may thereby protect the organism against toxic compounds. Has no detectable acyl-CoA dehydrogenase activity. This Fusarium oxysporum (Fusarium vascular wilt) protein is Nitroalkane oxidase.